The primary structure comprises 191 residues: Phosphoheptose isomerase (191 aa).

The region spanning 37–191 is the SIS domain; the sequence is IADSFKQDGK…IIQLIEKEME (155 aa). 52–54 serves as a coordination point for substrate; that stretch reads NGG. Residues His61 and Glu65 each contribute to the Zn(2+) site. Residues Glu65, 93–94, 119–121, Ser124, and Gln172 contribute to the substrate site; these read ND and STS. Residues Gln172 and His180 each coordinate Zn(2+).

The protein belongs to the SIS family. GmhA subfamily. In terms of assembly, homotetramer. The cofactor is Zn(2+).

Its subcellular location is the cytoplasm. The enzyme catalyses 2 D-sedoheptulose 7-phosphate = D-glycero-alpha-D-manno-heptose 7-phosphate + D-glycero-beta-D-manno-heptose 7-phosphate. It functions in the pathway carbohydrate biosynthesis; D-glycero-D-manno-heptose 7-phosphate biosynthesis; D-glycero-alpha-D-manno-heptose 7-phosphate and D-glycero-beta-D-manno-heptose 7-phosphate from sedoheptulose 7-phosphate: step 1/1. The protein operates within bacterial outer membrane biogenesis; LPS core biosynthesis. Functionally, catalyzes the isomerization of sedoheptulose 7-phosphate in D-glycero-D-manno-heptose 7-phosphate. The polypeptide is Phosphoheptose isomerase (Vibrio parahaemolyticus serotype O3:K6 (strain RIMD 2210633)).